The chain runs to 95 residues: Small ribosomal subunit protein bS6 (95 aa).

This sequence belongs to the bacterial ribosomal protein bS6 family.

Its function is as follows. Binds together with bS18 to 16S ribosomal RNA. This chain is Small ribosomal subunit protein bS6, found in Bacillus cytotoxicus (strain DSM 22905 / CIP 110041 / 391-98 / NVH 391-98).